A 212-amino-acid chain; its full sequence is Riboflavin synthase (212 aa).

Lumazine-binding repeat units follow at residues 1–97 (MFTG…VGGH) and 98–195 (LVSG…VDSV). 2,4-dihydroxypteridine is bound by residues 4 to 6 (GIV), 48 to 50 (CLT), 62 to 67 (DIVEET), 101 to 103 (GHI), Lys137, 146 to 148 (SLT), and 160 to 165 (FLIPET).

As to quaternary structure, homotrimer.

It carries out the reaction 2 6,7-dimethyl-8-(1-D-ribityl)lumazine + H(+) = 5-amino-6-(D-ribitylamino)uracil + riboflavin. It participates in cofactor biosynthesis; riboflavin biosynthesis; riboflavin from 2-hydroxy-3-oxobutyl phosphate and 5-amino-6-(D-ribitylamino)uracil: step 2/2. Functionally, catalyzes the dismutation of two molecules of 6,7-dimethyl-8-ribityllumazine, resulting in the formation of riboflavin and 5-amino-6-(D-ribitylamino)uracil. The protein is Riboflavin synthase (ribE) of Buchnera aphidicola subsp. Baizongia pistaciae (strain Bp).